The primary structure comprises 324 residues: Beta-ketoacyl-[acyl-carrier-protein] synthase III (324 aa).

Active-site residues include cysteine 114 and histidine 251. The segment at 252 to 256 (QANQR) is ACP-binding. Asparagine 281 is a catalytic residue.

Belongs to the thiolase-like superfamily. FabH family. As to quaternary structure, homodimer.

Its subcellular location is the cytoplasm. The catalysed reaction is malonyl-[ACP] + acetyl-CoA + H(+) = 3-oxobutanoyl-[ACP] + CO2 + CoA. It functions in the pathway lipid metabolism; fatty acid biosynthesis. Its function is as follows. Catalyzes the condensation reaction of fatty acid synthesis by the addition to an acyl acceptor of two carbons from malonyl-ACP. Catalyzes the first condensation reaction which initiates fatty acid synthesis and may therefore play a role in governing the total rate of fatty acid production. Possesses both acetoacetyl-ACP synthase and acetyl transacylase activities. Its substrate specificity determines the biosynthesis of branched-chain and/or straight-chain of fatty acids. In Rhodospirillum rubrum (strain ATCC 11170 / ATH 1.1.1 / DSM 467 / LMG 4362 / NCIMB 8255 / S1), this protein is Beta-ketoacyl-[acyl-carrier-protein] synthase III.